Here is a 302-residue protein sequence, read N- to C-terminus: O-antigen biosynthesis glycosyltransferase WbnK (302 aa).

The protein belongs to the glycosyltransferase 11 family.

The catalysed reaction is beta-D-Gal-(1-&gt;3)-alpha-D-GalNAc-(1-&gt;3)-alpha-D-GalNAc-di-trans,octa-cis-undecaprenyl diphosphate + GDP-beta-L-fucose = alpha-L-Fuc-(1-&gt;2)-beta-D-Gal-(1-&gt;3)-alpha-D-GalNAc-(1-&gt;3)-alpha-D-GalNAc-di-trans,octa-cis-undecaprenyl diphosphate + GDP + H(+). It functions in the pathway bacterial outer membrane biogenesis; LPS O-antigen biosynthesis. In terms of biological role, involved in the assembly of the O-repeating unit during O-antigen biosynthesis. This chain is O-antigen biosynthesis glycosyltransferase WbnK, found in Escherichia coli.